We begin with the raw amino-acid sequence, 354 residues long: Probable N-acetylmuramoyl-L-alanine amidase (354 aa).

Residues 1–39 (MVKVINNFVKVNQYDRPGLKLAAVKGIVMHWTATPGASA) form the signal peptide. The region spanning 40 to 152 (LNERNYFNGT…YDVTNKGCPT (113 aa)) is the N-acetylmuramoyl-L-alanine amidase domain.

The protein belongs to the N-acetylmuramoyl-L-alanine amidase 2 family.

The protein localises to the secreted. It catalyses the reaction Hydrolyzes the link between N-acetylmuramoyl residues and L-amino acid residues in certain cell-wall glycopeptides.. The polypeptide is Probable N-acetylmuramoyl-L-alanine amidase (Bacillus licheniformis).